Reading from the N-terminus, the 82-residue chain is Protein Vpu (82 aa).

Over 1 to 7 the chain is Extracellular; sequence MQPIPIV. The helical transmembrane segment at 8–28 threads the bilayer; the sequence is AIVALVVAIIIAIVVWSIVII. Residues 29 to 82 lie on the Cytoplasmic side of the membrane; the sequence is EYRKILRQRKIDRLIDRLIERAEDSGNESEGEISALVEMGVEMGHHAPWDVDDL. Residues serine 53 and serine 57 each carry the phosphoserine; by host CK2 modification.

Belongs to the HIV-1 VPU protein family. In terms of assembly, homopentamer. Interacts with host CD4 and BRTC; these interactions induce proteasomal degradation of CD4. Interacts (via transmembrane region) with host BST2 (via transmembrane region); this interaction leads to the degradation of host BST2. Interacts with host FBXW11. Interacts with host AP1M1; this interaction plays a role in the mistrafficking and subsequent degradation of host BST2. Interacts with host RANBP2; this interaction allows Vpu to down-regulate host BLM sumoylation. Post-translationally, phosphorylated by host CK2. This phosphorylation is necessary for interaction with human BTRC and degradation of CD4.

It is found in the host membrane. Its activity is regulated as follows. Ion channel activity is inhibited by hexamethylene amiloride in vitro. Functionally, enhances virion budding by targeting host CD4 and Tetherin/BST2 to proteasome degradation. Degradation of CD4 prevents any unwanted premature interactions between viral Env and its host receptor CD4 in the endoplasmic reticulum. Degradation of antiretroviral protein Tetherin/BST2 is important for virion budding, as BST2 tethers new viral particles to the host cell membrane. Mechanistically, Vpu bridges either CD4 or BST2 to BTRC, a substrate recognition subunit of the Skp1/Cullin/F-box protein E3 ubiquitin ligase, induces their ubiquitination and subsequent proteasomal degradation. The alteration of the E3 ligase specificity by Vpu seems to promote the degradation of host IKBKB, leading to NF-kappa-B down-regulation and subsequent apoptosis. Acts as a viroporin that forms an oligomeric ion channel in membranes. Modulates the host DNA repair mechanisms to promote degradation of nuclear viral cDNA in cells that are already productively infected in order to suppress immune sensing and proviral hyper-integration (superinfection). Manipulates PML-NBs and modulates SUMOylation of host BLM protein thereby enhancing its DNA-end processing activity toward viral unintegrated linear DNA. Also inhibits RAD52-mediated homologous repair of viral cDNA, preventing the generation of dead-end circular forms of single copies of the long terminal repeat and permitting sustained nucleolytic attack. This is Protein Vpu from Human immunodeficiency virus type 1 group M subtype B (isolate HXB2) (HIV-1).